A 287-amino-acid chain; its full sequence is UPF0725 protein At1g19060 (287 aa).

Belongs to the UPF0725 (EMB2204) family.

This Arabidopsis thaliana (Mouse-ear cress) protein is UPF0725 protein At1g19060.